Here is a 228-residue protein sequence, read N- to C-terminus: UPF0758 protein CKR_0778 (228 aa).

Positions 106 to 228 (RICSPQDAAV…FISLKEKGIL (123 aa)) constitute an MPN domain. Positions 177, 179, and 190 each coordinate Zn(2+). The JAMM motif motif lies at 177 to 190 (HNHPSGDPSPSNED).

This sequence belongs to the UPF0758 family.

This Clostridium kluyveri (strain NBRC 12016) protein is UPF0758 protein CKR_0778.